Consider the following 160-residue polypeptide: 3-hydroxyacyl-[acyl-carrier-protein] dehydratase FabZ (160 aa).

H63 is an active-site residue.

The protein belongs to the thioester dehydratase family. FabZ subfamily.

The protein resides in the cytoplasm. It carries out the reaction a (3R)-hydroxyacyl-[ACP] = a (2E)-enoyl-[ACP] + H2O. Involved in unsaturated fatty acids biosynthesis. Catalyzes the dehydration of short chain beta-hydroxyacyl-ACPs and long chain saturated and unsaturated beta-hydroxyacyl-ACPs. This chain is 3-hydroxyacyl-[acyl-carrier-protein] dehydratase FabZ, found in Xylella fastidiosa (strain M23).